The primary structure comprises 442 residues: tRNA-2-methylthio-N(6)-dimethylallyladenosine synthase (442 aa).

The MTTase N-terminal domain maps to 5-122 (KRIFIKTFGC…LPDMIESKRR (118 aa)). 6 residues coordinate [4Fe-4S] cluster: C14, C51, C85, C159, C163, and C166. Residues 145–377 (RVEGAAAFLS…QALNEAQGKA (233 aa)) enclose the Radical SAM core domain. Residues 380-442 (ASMVGSIQRV…LSHTLRGELV (63 aa)) enclose the TRAM domain.

It belongs to the methylthiotransferase family. MiaB subfamily. In terms of assembly, monomer. [4Fe-4S] cluster serves as cofactor.

It is found in the cytoplasm. It catalyses the reaction N(6)-dimethylallyladenosine(37) in tRNA + (sulfur carrier)-SH + AH2 + 2 S-adenosyl-L-methionine = 2-methylsulfanyl-N(6)-dimethylallyladenosine(37) in tRNA + (sulfur carrier)-H + 5'-deoxyadenosine + L-methionine + A + S-adenosyl-L-homocysteine + 2 H(+). Its function is as follows. Catalyzes the methylthiolation of N6-(dimethylallyl)adenosine (i(6)A), leading to the formation of 2-methylthio-N6-(dimethylallyl)adenosine (ms(2)i(6)A) at position 37 in tRNAs that read codons beginning with uridine. In Methylobacillus flagellatus (strain ATCC 51484 / DSM 6875 / VKM B-1610 / KT), this protein is tRNA-2-methylthio-N(6)-dimethylallyladenosine synthase.